A 384-amino-acid chain; its full sequence is F-box A protein 224 (384 aa).

The 52-residue stretch at 71–122 (PKSLSDFPIGVMYDVLGHVDPFERLVLRKVSRNLRDVVQKMRCELDALYVNK) folds into the F-box domain.

This sequence belongs to the FTH family.

This Caenorhabditis elegans protein is F-box A protein 224 (fbxa-224).